A 213-amino-acid polypeptide reads, in one-letter code: Phosphatidylserine decarboxylase proenzyme (213 aa).

Residue Ser182 is the Schiff-base intermediate with substrate; via pyruvic acid of the active site. Ser182 carries the post-translational modification Pyruvic acid (Ser); by autocatalysis.

It belongs to the phosphatidylserine decarboxylase family. PSD-A subfamily. As to quaternary structure, heterodimer of a large membrane-associated beta subunit and a small pyruvoyl-containing alpha subunit. It depends on pyruvate as a cofactor. In terms of processing, is synthesized initially as an inactive proenzyme. Formation of the active enzyme involves a self-maturation process in which the active site pyruvoyl group is generated from an internal serine residue via an autocatalytic post-translational modification. Two non-identical subunits are generated from the proenzyme in this reaction, and the pyruvate is formed at the N-terminus of the alpha chain, which is derived from the carboxyl end of the proenzyme. The post-translation cleavage follows an unusual pathway, termed non-hydrolytic serinolysis, in which the side chain hydroxyl group of the serine supplies its oxygen atom to form the C-terminus of the beta chain, while the remainder of the serine residue undergoes an oxidative deamination to produce ammonia and the pyruvoyl prosthetic group on the alpha chain.

It is found in the cell membrane. The catalysed reaction is a 1,2-diacyl-sn-glycero-3-phospho-L-serine + H(+) = a 1,2-diacyl-sn-glycero-3-phosphoethanolamine + CO2. It participates in phospholipid metabolism; phosphatidylethanolamine biosynthesis; phosphatidylethanolamine from CDP-diacylglycerol: step 2/2. Catalyzes the formation of phosphatidylethanolamine (PtdEtn) from phosphatidylserine (PtdSer). This is Phosphatidylserine decarboxylase proenzyme from Chlorobium phaeobacteroides (strain BS1).